The sequence spans 189 residues: MAQLYYKYGTMNSGKTIEILKVAHNYEEQGKPVVIMTSALDTRDGFGIVSSRIGMRREAIPISNDIDIFTFIAQLEEKPYCVLIDESQFLSKQNVYDLARVVDELNVPVMAFGLKNDFQNNLFEGSKHLLLLADKIDEIKTICQYCSKKATMVLRTENGKPVYEGDQIQIGGNETYIPVCRKHYFNPEI.

Residues 9 to 16 (GTMNSGKT) and 85 to 88 (DESQ) contribute to the ATP site. Catalysis depends on E86, which acts as the Proton acceptor. Zn(2+)-binding residues include C143, C146, C180, and H183.

It belongs to the thymidine kinase family. As to quaternary structure, homotetramer.

Its subcellular location is the cytoplasm. The catalysed reaction is thymidine + ATP = dTMP + ADP + H(+). The polypeptide is Thymidine kinase (Streptococcus pyogenes serotype M6 (strain ATCC BAA-946 / MGAS10394)).